A 124-amino-acid chain; its full sequence is Aspartate 1-decarboxylase (124 aa).

Serine 25 functions as the Schiff-base intermediate with substrate; via pyruvic acid in the catalytic mechanism. Serine 25 carries the pyruvic acid (Ser) modification. Threonine 57 serves as a coordination point for substrate. Tyrosine 58 acts as the Proton donor in catalysis. Position 73-75 (73-75) interacts with substrate; that stretch reads GAA.

It belongs to the PanD family. Heterooctamer of four alpha and four beta subunits. Requires pyruvate as cofactor. Post-translationally, is synthesized initially as an inactive proenzyme, which is activated by self-cleavage at a specific serine bond to produce a beta-subunit with a hydroxyl group at its C-terminus and an alpha-subunit with a pyruvoyl group at its N-terminus.

The protein localises to the cytoplasm. The catalysed reaction is L-aspartate + H(+) = beta-alanine + CO2. The protein operates within cofactor biosynthesis; (R)-pantothenate biosynthesis; beta-alanine from L-aspartate: step 1/1. In terms of biological role, catalyzes the pyruvoyl-dependent decarboxylation of aspartate to produce beta-alanine. This is Aspartate 1-decarboxylase from Syntrophobacter fumaroxidans (strain DSM 10017 / MPOB).